The sequence spans 324 residues: Glyoxylate/hydroxypyruvate reductase B (324 aa).

Residues arginine 237 and glutamate 266 contribute to the active site. Residue histidine 285 is the Proton donor of the active site.

This sequence belongs to the D-isomer specific 2-hydroxyacid dehydrogenase family. GhrB subfamily. As to quaternary structure, homodimer.

The protein localises to the cytoplasm. It carries out the reaction glycolate + NADP(+) = glyoxylate + NADPH + H(+). The enzyme catalyses (R)-glycerate + NAD(+) = 3-hydroxypyruvate + NADH + H(+). The catalysed reaction is (R)-glycerate + NADP(+) = 3-hydroxypyruvate + NADPH + H(+). In terms of biological role, catalyzes the NADPH-dependent reduction of glyoxylate and hydroxypyruvate into glycolate and glycerate, respectively. The sequence is that of Glyoxylate/hydroxypyruvate reductase B from Escherichia fergusonii (strain ATCC 35469 / DSM 13698 / CCUG 18766 / IAM 14443 / JCM 21226 / LMG 7866 / NBRC 102419 / NCTC 12128 / CDC 0568-73).